The following is a 559-amino-acid chain: Pentatricopeptide repeat-containing protein At4g38010 (559 aa).

PPR repeat units follow at residues 70 to 104, 105 to 139, 140 to 170, 171 to 201, 203 to 233, 238 to 268, 269 to 304, 305 to 339, 340 to 370, 371 to 405, 406 to 440, and 443 to 473; these read SSFS…GFSP, DMFT…GFYD, DIYV…MPVR, DVVS…MDVE, NLAT…ILKR, SLET…LEKK, DKVS…GIKP, DGHI…GIKW, DTHI…IRSK, NVFT…GFKP, NLVT…EYNL, and KLEH…MPVK. Residues 478-554 are type E motif; the sequence is ICGAILSACK…VPGSSYIEKF (77 aa).

This sequence belongs to the PPR family. PCMP-E subfamily.

The sequence is that of Pentatricopeptide repeat-containing protein At4g38010 (PCMP-E45) from Arabidopsis thaliana (Mouse-ear cress).